A 189-amino-acid chain; its full sequence is uncharacterized protein (189 aa).

The region spanning arginine 2 to arginine 62 is the HTH tetR-type domain. The segment at residues threonine 25–phenylalanine 44 is a DNA-binding region (H-T-H motif).

This is an uncharacterized protein from Bacillus subtilis (strain 168).